Reading from the N-terminus, the 636-residue chain is Threonine--tRNA ligase (636 aa).

Positions 1 to 61 (MPVITLPDGS…TQDVSLSIIT (61 aa)) constitute a TGS domain. The catalytic stretch occupies residues 242–533 (DHRKLGKKFD…LIEEYEGAFP (292 aa)). Residues cysteine 333, histidine 384, and histidine 510 each contribute to the Zn(2+) site.

Belongs to the class-II aminoacyl-tRNA synthetase family. As to quaternary structure, homodimer. The cofactor is Zn(2+).

The protein localises to the cytoplasm. The enzyme catalyses tRNA(Thr) + L-threonine + ATP = L-threonyl-tRNA(Thr) + AMP + diphosphate + H(+). Catalyzes the attachment of threonine to tRNA(Thr) in a two-step reaction: L-threonine is first activated by ATP to form Thr-AMP and then transferred to the acceptor end of tRNA(Thr). Also edits incorrectly charged L-seryl-tRNA(Thr). This Saccharophagus degradans (strain 2-40 / ATCC 43961 / DSM 17024) protein is Threonine--tRNA ligase.